The following is a 307-amino-acid chain: Protoheme IX farnesyltransferase (307 aa).

9 consecutive transmembrane segments (helical) span residues 33 to 53, 62 to 82, 111 to 131, 132 to 152, 159 to 179, 185 to 205, 229 to 249, 251 to 271, and 287 to 307; these read IGIVNSNLITTFAGMWLAFYF, LHIVFFTLFGAALVIAGSCSI, RVLWLGVTLVAIGTMSLLMTT, VTAAIVGLIGVVTYVFLYTLW, LNTVVGSISGAVPPVIGWTAV, IVPLILFLIMFLWQPPHFLAL, MTKRQIIVWVACLLPLPFYLF, LGIPFLIVATVLNVGWLLLGL, and FVYSLNYLTILFVAMVIATIW.

The protein belongs to the UbiA prenyltransferase family. Protoheme IX farnesyltransferase subfamily. Interacts with CtaA.

The protein localises to the cell membrane. It carries out the reaction heme b + (2E,6E)-farnesyl diphosphate + H2O = Fe(II)-heme o + diphosphate. It functions in the pathway porphyrin-containing compound metabolism; heme O biosynthesis; heme O from protoheme: step 1/1. Its function is as follows. Converts heme B (protoheme IX) to heme O by substitution of the vinyl group on carbon 2 of heme B porphyrin ring with a hydroxyethyl farnesyl side group. The sequence is that of Protoheme IX farnesyltransferase from Geobacillus thermodenitrificans (strain NG80-2).